A 178-amino-acid polypeptide reads, in one-letter code: Large ribosomal subunit protein uL6 (178 aa).

The protein belongs to the universal ribosomal protein uL6 family. In terms of assembly, part of the 50S ribosomal subunit.

Its function is as follows. This protein binds to the 23S rRNA, and is important in its secondary structure. It is located near the subunit interface in the base of the L7/L12 stalk, and near the tRNA binding site of the peptidyltransferase center. The chain is Large ribosomal subunit protein uL6 from Micrococcus luteus (Micrococcus lysodeikticus).